A 156-amino-acid polypeptide reads, in one-letter code: MPRRRVIGQRKILPDPKFGSELLAKFVNILMVDGKKSTAESIVYSALETLAQRSGKSELEAFEVALENVRPTVEVKSRRVGGSTYQVPVEVRPVRRNALAMRWIVEAARKRGDKSMALRLANELSDAADNKGTAVKKREDVHRMAEANKAFAHYRW.

It belongs to the universal ribosomal protein uS7 family. As to quaternary structure, part of the 30S ribosomal subunit. Contacts proteins S9 and S11.

In terms of biological role, one of the primary rRNA binding proteins, it binds directly to 16S rRNA where it nucleates assembly of the head domain of the 30S subunit. Is located at the subunit interface close to the decoding center, probably blocks exit of the E-site tRNA. This is Small ribosomal subunit protein uS7 from Cronobacter sakazakii (strain ATCC BAA-894) (Enterobacter sakazakii).